We begin with the raw amino-acid sequence, 643 residues long: Probable potassium transport system protein Kup 2 (643 aa).

Residues 1-20 (MSSHVPSFLRGTPDMTAHGG) form a disordered region. 12 helical membrane passes run 27–47 (VAGL…TSPL), 70–90 (VLSL…VIII), 120–140 (LMVS…SIIT), 157–177 (PHLE…LFAI), 185–205 (VGKM…ILGI), 231–251 (GWHA…AEAL), 267–287 (WYLL…ALLI), 300–320 (LAPA…TVIA), 357–377 (IYLP…VVGF), 389–409 (VAVT…MLLI), 419–439 (WLIG…SIKI), and 440–460 (PDGG…LTTW).

This sequence belongs to the HAK/KUP transporter (TC 2.A.72) family.

The protein localises to the cell inner membrane. The enzyme catalyses K(+)(in) + H(+)(in) = K(+)(out) + H(+)(out). Transport of potassium into the cell. Likely operates as a K(+):H(+) symporter. This Paramagnetospirillum magneticum (strain ATCC 700264 / AMB-1) (Magnetospirillum magneticum) protein is Probable potassium transport system protein Kup 2.